A 236-amino-acid chain; its full sequence is Probable sulfate/thiosulfate import ATP-binding protein CysA (236 aa).

Residues 3 to 233 (ILIENISKRF…PTNTFVTNFL (231 aa)) enclose the ABC transporter domain. ATP is bound at residue 35–42 (GPSGSGKS).

This sequence belongs to the ABC transporter superfamily. Sulfate/tungstate importer (TC 3.A.1.6) family.

Its subcellular location is the plastid. The protein localises to the chloroplast. The catalysed reaction is sulfate(out) + ATP + H2O = sulfate(in) + ADP + phosphate + H(+). It carries out the reaction thiosulfate(out) + ATP + H2O = thiosulfate(in) + ADP + phosphate + H(+). In terms of biological role, part of the ABC transporter complex involved in sulfate/thiosulfate import. Responsible for energy coupling to the transport system. This chain is Probable sulfate/thiosulfate import ATP-binding protein CysA, found in Chlorella vulgaris (Green alga).